A 141-amino-acid chain; its full sequence is Large ribosomal subunit protein uL11 (141 aa).

The protein belongs to the universal ribosomal protein uL11 family. In terms of assembly, part of the ribosomal stalk of the 50S ribosomal subunit. Interacts with L10 and the large rRNA to form the base of the stalk. L10 forms an elongated spine to which L12 dimers bind in a sequential fashion forming a multimeric L10(L12)X complex. In terms of processing, one or more lysine residues are methylated.

Forms part of the ribosomal stalk which helps the ribosome interact with GTP-bound translation factors. This is Large ribosomal subunit protein uL11 from Kosmotoga olearia (strain ATCC BAA-1733 / DSM 21960 / TBF 19.5.1).